Consider the following 86-residue polypeptide: Putative membrane protein insertion efficiency factor (86 aa).

This sequence belongs to the UPF0161 family.

The protein resides in the cell inner membrane. Its function is as follows. Could be involved in insertion of integral membrane proteins into the membrane. In Pseudomonas aeruginosa (strain UCBPP-PA14), this protein is Putative membrane protein insertion efficiency factor.